The sequence spans 209 residues: N-acetyltransferase aca1 (209 aa).

Residues 26-202 form the N-acetyltransferase domain; sequence TNVKNKEELL…DAYIYQYHFP (177 aa). Asn-118 serves as a coordination point for substrate. 128-133 provides a ligand contact to CoA; sequence RSKGIG. Residue 155–156 coordinates substrate; the sequence is NL.

The protein belongs to the acetyltransferase family. As to quaternary structure, homodimer.

It localises to the cytoplasm. Its subcellular location is the mitochondrion. The enzyme catalyses L-glutamate 5-semialdehyde + acetyl-CoA = N-acetyl-L-glutamate 5-semialdehyde + CoA + H(+). N-acetyltransferase involved in oxidative stress resistance. Acetylates the toxic proline metabolism intermediate (S)-1-pyrroline-5-carboxylate (P5C), or more likely its spontaneously forming tautomer glutamate-5-semialdehyde (GSA) into N-acetyl-GSA for arginine synthesis in the mitochondria. P5C has been shown to increase the levels of reactive oxygen species (ROS) in the cell by inhibiting the function of the respiratory chain in the mitochondria. The enzyme is able to reduce intracellular ROS levels under P5C-induced oxidative stress and protects cells from damage by oxidative stress. Also acetylates and thereby detoxifies the proline analog azetidine-2-carboxylate (AZC), however it is unlikely that AZC is a natural substrate as it occurs only in plants belonging to the Lilaceae family. The chain is N-acetyltransferase aca1 from Schizosaccharomyces pombe (strain 972 / ATCC 24843) (Fission yeast).